The chain runs to 248 residues: Ribonuclease PH (248 aa).

Residues arginine 93 and 131-133 (GTR) each bind phosphate.

The protein belongs to the RNase PH family. As to quaternary structure, homohexameric ring arranged as a trimer of dimers.

The catalysed reaction is tRNA(n+1) + phosphate = tRNA(n) + a ribonucleoside 5'-diphosphate. Its function is as follows. Phosphorolytic 3'-5' exoribonuclease that plays an important role in tRNA 3'-end maturation. Removes nucleotide residues following the 3'-CCA terminus of tRNAs; can also add nucleotides to the ends of RNA molecules by using nucleoside diphosphates as substrates, but this may not be physiologically important. Probably plays a role in initiation of 16S rRNA degradation (leading to ribosome degradation) during starvation. The polypeptide is Ribonuclease PH (Bifidobacterium longum (strain NCC 2705)).